We begin with the raw amino-acid sequence, 216 residues long: U1 small nuclear ribonucleoprotein A (216 aa).

RRM domains are found at residues 7-86 and 142-216; these read QTIY…YSKS and QILF…FAKK. Residues 97 to 142 are disordered; the sequence is TFKERPKKVKPPKPAPGTDEKKDKKKKPSSAENSNPNAQTEQPPNQ. Positions 126-142 are enriched in polar residues; sequence SAENSNPNAQTEQPPNQ.

It belongs to the RRM U1 A/B'' family. As to quaternary structure, belongs to the spliceosome where it is associated with snRNP U1. Interacts with the SMN complex.

It localises to the nucleus. In terms of biological role, binds stem loop II of U1 snRNA. It is the first snRNP to interact with pre-mRNA. This interaction is required for the subsequent binding of U2 snRNP and the U4/U6/U5 tri-snRNP. Plays a role in regulating sex-lethal splicing. The chain is U1 small nuclear ribonucleoprotein A (snf) from Drosophila melanogaster (Fruit fly).